The sequence spans 105 residues: Small ribosomal subunit protein uS10 (105 aa).

This sequence belongs to the universal ribosomal protein uS10 family. In terms of assembly, part of the 30S ribosomal subunit.

Involved in the binding of tRNA to the ribosomes. This is Small ribosomal subunit protein uS10 from Chlamydia abortus (strain DSM 27085 / S26/3) (Chlamydophila abortus).